Reading from the N-terminus, the 66-residue chain is Conotoxin Lt3.5 (66 aa).

The N-terminal stretch at Met1–Ala20 is a signal peptide. Residues Val21 to Arg53 constitute a propeptide that is removed on maturation. 3 cysteine pairs are disulfide-bonded: Cys54/Cys66, Cys55/Cys62, and Cys59/Cys65. A 4-hydroxyproline modification is found at Pro64.

This sequence belongs to the conotoxin M superfamily. In terms of tissue distribution, expressed by the venom duct.

Its subcellular location is the secreted. The chain is Conotoxin Lt3.5 from Conus litteratus (Lettered cone).